A 213-amino-acid polypeptide reads, in one-letter code: Transcription antitermination protein NusB (213 aa).

It belongs to the NusB family.

Involved in transcription antitermination. Required for transcription of ribosomal RNA (rRNA) genes. Binds specifically to the boxA antiterminator sequence of the ribosomal RNA (rrn) operons. The polypeptide is Transcription antitermination protein NusB (Picosynechococcus sp. (strain ATCC 27264 / PCC 7002 / PR-6) (Agmenellum quadruplicatum)).